We begin with the raw amino-acid sequence, 358 residues long: Peptide chain release factor 1 (358 aa).

Gln233 carries the post-translational modification N5-methylglutamine.

Belongs to the prokaryotic/mitochondrial release factor family. In terms of processing, methylated by PrmC. Methylation increases the termination efficiency of RF1.

It is found in the cytoplasm. Functionally, peptide chain release factor 1 directs the termination of translation in response to the peptide chain termination codons UAG and UAA. The chain is Peptide chain release factor 1 from Geobacillus sp. (strain WCH70).